Reading from the N-terminus, the 315-residue chain is Glycine--tRNA ligase alpha subunit (315 aa).

The protein belongs to the class-II aminoacyl-tRNA synthetase family. As to quaternary structure, tetramer of two alpha and two beta subunits.

Its subcellular location is the cytoplasm. It catalyses the reaction tRNA(Gly) + glycine + ATP = glycyl-tRNA(Gly) + AMP + diphosphate. The sequence is that of Glycine--tRNA ligase alpha subunit from Pseudomonas putida (strain W619).